Here is a 151-residue protein sequence, read N- to C-terminus: SsrA-binding protein (151 aa).

Residues 132–151 (KRQTIKKRDQDREIHRKYGI) form a disordered region.

It belongs to the SmpB family.

It is found in the cytoplasm. Functionally, required for rescue of stalled ribosomes mediated by trans-translation. Binds to transfer-messenger RNA (tmRNA), required for stable association of tmRNA with ribosomes. tmRNA and SmpB together mimic tRNA shape, replacing the anticodon stem-loop with SmpB. tmRNA is encoded by the ssrA gene; the 2 termini fold to resemble tRNA(Ala) and it encodes a 'tag peptide', a short internal open reading frame. During trans-translation Ala-aminoacylated tmRNA acts like a tRNA, entering the A-site of stalled ribosomes, displacing the stalled mRNA. The ribosome then switches to translate the ORF on the tmRNA; the nascent peptide is terminated with the 'tag peptide' encoded by the tmRNA and targeted for degradation. The ribosome is freed to recommence translation, which seems to be the essential function of trans-translation. The sequence is that of SsrA-binding protein from Lactobacillus gasseri (strain ATCC 33323 / DSM 20243 / BCRC 14619 / CIP 102991 / JCM 1131 / KCTC 3163 / NCIMB 11718 / NCTC 13722 / AM63).